Consider the following 77-residue polypeptide: Apelin (77 aa).

The signal sequence occupies residues 1–22 (MNLSFCVQALLLLWLSLTAVCG). Positions 23 to 41 (VPLMLPPDGKGLEEGNMRY) are excised as a propeptide. The disordered stretch occupies residues 45–77 (PRTSRTGPGAWQGGRRKFRRQRPRLSHKGPMPF). Positions 58–71 (GRRKFRRQRPRLSH) are enriched in basic residues.

Belongs to the apelin family. Several active peptides may be produced by proteolytic processing of the peptide precursor. In terms of tissue distribution, expressed in the lung, testis, ovary, uterus and mammary gland. Expressed in neurons in the thalamic paraventricular and hypothalamic supraoptic nuclei. The lung, testis and uterus mainly contain a large form that looks like apelin-36, whereas the mammary gland seems to contain 2 forms of apelin, a large form close to apelin-36 and a small form close to apelin-13 (at protein level). Widely expressed in the adult, with highest levels in the mammary gland of lactating animals, very high levels in the lung, intermediate levels in the spinal cord, ovary, adipose tissue, brain (neuronal cell bodies and fibers in the supraoptic and the paraventricular nuclei), heart and testis, and lowest levels in the pituitary gland, kidney, stomach, uterus and pancreas.

The protein localises to the secreted. Its subcellular location is the extracellular space. Peptide hormone that functions as endogenous ligand for the G-protein-coupled apelin receptor (APLNR/APJ), that plays a role in cadiovascular homeostasis. Functions as a balanced agonist activating both G(i) protein pathway and beta-arrestin pathway of APLNR. Downstream G proteins activation, apelin can inhibit cAMP production and activate key intracellular effectors such as ERKs. On the other hand, APLNR activation induces beta-arrestin recruitment to the membrane leading to desensitization and internalization of the receptor. Apelin blunts cardiac hypertrophic induction from APLNR on response to pathological stimuli, but also induces myocardial hypertrophy under normal conditions. Apelin-36 dissociates more hardly than (pyroglu)apelin-13 from APLNR. Involved in the regulation of cardiac precursor cell movements during gastrulation and heart morphogenesis. Has an inhibitory effect on cytokine production in response to T-cell receptor/CD3 cross-linking; the oral intake of apelin in the colostrum and the milk might therefore modulate immune responses in neonates. Plays a role in early coronary blood vessels formation. Mediates myocardial contractility in an ERK1/2-dependent manner. May also have a role in the central control of body fluid homeostasis by influencing vasopressin release and drinking behavior. This chain is Apelin, found in Rattus norvegicus (Rat).